Reading from the N-terminus, the 367-residue chain is NADH-quinone oxidoreductase subunit H (367 aa).

8 consecutive transmembrane segments (helical) span residues 18–38 (VLLF…VAYL), 87–107 (LCFL…WAVI), 132–152 (IGVL…IIAG), 180–200 (LTIV…IVIA), 204–224 (MPYW…ISAL), 257–277 (FFLG…IFFF), 291–311 (IIPG…CFIW), and 328–348 (GWKV…GILV).

Belongs to the complex I subunit 1 family. NDH-1 is composed of 14 different subunits. Subunits NuoA, H, J, K, L, M, N constitute the membrane sector of the complex.

The protein localises to the cell inner membrane. It catalyses the reaction a quinone + NADH + 5 H(+)(in) = a quinol + NAD(+) + 4 H(+)(out). In terms of biological role, NDH-1 shuttles electrons from NADH, via FMN and iron-sulfur (Fe-S) centers, to quinones in the respiratory chain. The immediate electron acceptor for the enzyme in this species is believed to be ubiquinone. Couples the redox reaction to proton translocation (for every two electrons transferred, four hydrogen ions are translocated across the cytoplasmic membrane), and thus conserves the redox energy in a proton gradient. This subunit may bind ubiquinone. In Ehrlichia ruminantium (strain Gardel), this protein is NADH-quinone oxidoreductase subunit H.